Consider the following 283-residue polypeptide: NAD kinase (283 aa).

The active-site Proton acceptor is D73. NAD(+) contacts are provided by residues 73–74, 146–147, H157, H176, D178, 189–194, and A213; these read DG, NE, and TAYNLS.

Belongs to the NAD kinase family. A divalent metal cation is required as a cofactor.

The protein localises to the cytoplasm. It catalyses the reaction NAD(+) + ATP = ADP + NADP(+) + H(+). Functionally, involved in the regulation of the intracellular balance of NAD and NADP, and is a key enzyme in the biosynthesis of NADP. Catalyzes specifically the phosphorylation on 2'-hydroxyl of the adenosine moiety of NAD to yield NADP. The polypeptide is NAD kinase (Haloarcula marismortui (strain ATCC 43049 / DSM 3752 / JCM 8966 / VKM B-1809) (Halobacterium marismortui)).